The following is a 90-amino-acid chain: Caspase recruitment domain-containing protein 18 (90 aa).

The 90-residue stretch at 1-90 (MADQLLRKKR…PQLASKMGLH (90 aa)) folds into the CARD domain.

Interacts with pro-CASP1. Interacts with CARD8. As to expression, primarily expressed in the heart and placenta.

Its function is as follows. Inhibits generation of IL-1-beta by interacting with caspase-1 and preventing its association with RIP2. Down-regulates the release of IL1B. In Homo sapiens (Human), this protein is Caspase recruitment domain-containing protein 18 (CARD18).